The following is a 455-amino-acid chain: tRNA modification GTPase MnmE (455 aa).

3 residues coordinate (6S)-5-formyl-5,6,7,8-tetrahydrofolate: Arg24, Glu81, and Lys120. In terms of domain architecture, TrmE-type G spans 216–378 (GMTVVIAGRP…LREHLKACMG (163 aa)). A K(+)-binding site is contributed by Asn226. GTP contacts are provided by residues 226–231 (NAGKSS), 245–251 (TDIAGTT), 270–273 (DTAG), and 335–338 (NKAD). Ser230 contacts Mg(2+). Residues Thr245, Ile247, and Thr250 each contribute to the K(+) site. Thr251 is a binding site for Mg(2+). Lys455 is a (6S)-5-formyl-5,6,7,8-tetrahydrofolate binding site.

It belongs to the TRAFAC class TrmE-Era-EngA-EngB-Septin-like GTPase superfamily. TrmE GTPase family. As to quaternary structure, homodimer. Heterotetramer of two MnmE and two MnmG subunits. The cofactor is K(+).

It localises to the cytoplasm. Its function is as follows. Exhibits a very high intrinsic GTPase hydrolysis rate. Involved in the addition of a carboxymethylaminomethyl (cmnm) group at the wobble position (U34) of certain tRNAs, forming tRNA-cmnm(5)s(2)U34. This is tRNA modification GTPase MnmE from Ectopseudomonas mendocina (strain ymp) (Pseudomonas mendocina).